Reading from the N-terminus, the 263-residue chain is MAKMRISPELKKLIEKYRCVKDTEGMSPAKVYKLGENENLYLKMTDSRYKGTTYDVEREKDMMLWLEGKLPVPKVVHFERHDGWSNLLMSEADGVLCSEEYEDEQSPEKIIELYAECIRLFHSIDISDCPYTNSLDSRLAELDYLLNNDLADVDCENWEEDTPFKDPRELYDFLKTEKPEEELVFSHGDLGDSKIFVKDGKVSGFIDLGRSGRADKWYDIPFCVRSIREDIGEEQYVELFFDLLGIKPDWEKIKYYILLDELF.

The Proton acceptor role is filled by Asp189.

This sequence belongs to the aminoglycoside phosphotransferase family.

The enzyme catalyses kanamycin A + ATP = kanamycin 3'-phosphate + ADP + H(+). Its function is as follows. Resistance to kanamycin and structurally-related aminoglycosides, including amikacin. The polypeptide is Aminoglycoside 3'-phosphotransferase (aphA) (Staphylococcus aureus).